We begin with the raw amino-acid sequence, 161 residues long: ATP synthase subunit b' (161 aa).

Residues 30–47 (VMAIQFLVLAALLNKLFY) form a helical membrane-spanning segment.

It belongs to the ATPase B chain family. F-type ATPases have 2 components, F(1) - the catalytic core - and F(0) - the membrane proton channel. F(1) has five subunits: alpha(3), beta(3), gamma(1), delta(1), epsilon(1). F(0) has four main subunits: a(1), b(1), b'(1) and c(10-14). The alpha and beta chains form an alternating ring which encloses part of the gamma chain. F(1) is attached to F(0) by a central stalk formed by the gamma and epsilon chains, while a peripheral stalk is formed by the delta, b and b' chains.

The protein localises to the cellular thylakoid membrane. Functionally, f(1)F(0) ATP synthase produces ATP from ADP in the presence of a proton or sodium gradient. F-type ATPases consist of two structural domains, F(1) containing the extramembraneous catalytic core and F(0) containing the membrane proton channel, linked together by a central stalk and a peripheral stalk. During catalysis, ATP synthesis in the catalytic domain of F(1) is coupled via a rotary mechanism of the central stalk subunits to proton translocation. Its function is as follows. Component of the F(0) channel, it forms part of the peripheral stalk, linking F(1) to F(0). The b'-subunit is a diverged and duplicated form of b found in plants and photosynthetic bacteria. This Picosynechococcus sp. (strain ATCC 27264 / PCC 7002 / PR-6) (Agmenellum quadruplicatum) protein is ATP synthase subunit b'.